A 352-amino-acid polypeptide reads, in one-letter code: Fe-S cluster assembly protein DRE2 (352 aa).

The span at 1–11 (MAPTAVYTQKD) shows a compositional bias: polar residues. The tract at residues 1-24 (MAPTAVYTQKDSPSSSQPSSKGPA) is disordered. The N-terminal SAM-like domain stretch occupies residues 1-196 (MAPTAVYTQK…TVTSAPSVPL (196 aa)). A linker region spans residues 196-237 (LLLRKRGDPAKKKALWALTTDASASPSTKIDADALLTAEDKA). [2Fe-2S] cluster-binding residues include cysteine 243, cysteine 257, cysteine 260, and cysteine 262. Residues 243 to 262 (CAPVDRSAPRRKKACKNCSC) form a fe-S binding site A region. [4Fe-4S] cluster contacts are provided by cysteine 315, cysteine 318, cysteine 326, and cysteine 329. 2 consecutive short sequence motifs (cx2C motif) follow at residues 315 to 318 (CGSC) and 326 to 329 (CAGC). The fe-S binding site B stretch occupies residues 315–329 (CGSCFLGDAFRCAGC).

The protein belongs to the anamorsin family. As to quaternary structure, monomer. Interacts with TAH18. Interacts with MIA40. The cofactor is [2Fe-2S] cluster. Requires [4Fe-4S] cluster as cofactor.

The protein resides in the cytoplasm. It localises to the mitochondrion intermembrane space. In terms of biological role, component of the cytosolic iron-sulfur (Fe-S) protein assembly (CIA) machinery required for the maturation of extramitochondrial Fe-S proteins. Part of an electron transfer chain functioning in an early step of cytosolic Fe-S biogenesis, facilitating the de novo assembly of a [4Fe-4S] cluster on the scaffold complex CFD1-NBP35. Electrons are transferred to DRE2 from NADPH via the FAD- and FMN-containing protein TAH18. TAH18-DRE2 are also required for the assembly of the diferric tyrosyl radical cofactor of ribonucleotide reductase (RNR), probably by providing electrons for reduction during radical cofactor maturation in the catalytic small subunit RNR2. The polypeptide is Fe-S cluster assembly protein DRE2 (Coprinopsis cinerea (strain Okayama-7 / 130 / ATCC MYA-4618 / FGSC 9003) (Inky cap fungus)).